The primary structure comprises 53 residues: Minor histocompatibility protein HMSD variant form (53 aa).

As to quaternary structure, ACC-6 forms a complex with MHC HLA-B*4403. Highly expressed in dendritic cells and primary leukemia cells, especially those of myeloid lineage. ACC-6 expression is limited to cells of the hematopoietic lineage.

This splice variant of HMSD is the precursor of the histocompatibility antigen ACC-6. More generally, minor histocompatibility antigens (mHags) refer to immunogenic peptide which, when complexed with MHC, can generate an immune response after recognition by specific T-cells. The peptides are derived from polymorphic intracellular proteins, which are cleaved by normal pathways of antigen processing. The binding of these peptides to MHC class I or class II molecules and its expression on the cell surface can stimulate T-cell responses and thereby trigger graft rejection or graft-versus-host disease (GVHD) after hematopoietic stem cell transplantation from HLA-identical sibling donor. GVHD is a frequent complication after bone marrow transplantation (BMT), due to mismatch of minor histocompatibility antigen in HLA-matched sibling marrow transplants. However, associated with GVHD, a favorable graft-versus-leukemia (GVL) can be induced by donor-recipient disparities in mHags. ACC-6 is presented to the cell surface by MHC HLA-B*4403. This complex specifically elicits donor-cytotoxic T-lymphocyte (CTL) reactivity against hematologic malignancies after treatment by HLA-identical allogenic BMT. It induces cell recognition and lysis by CTL. Immunogenicity of most autosomal mHags results from single-nucleotide polymorphisms that cause amino-acid substitutions within epitopes, leading to the differential recognition of peptides between donor and recipient. The protein is Minor histocompatibility protein HMSD variant form (HMSD) of Homo sapiens (Human).